A 363-amino-acid chain; its full sequence is Chorismate synthase (363 aa).

Positions 48 and 54 each coordinate NADP(+). Residues 125 to 127, 237 to 238, G277, 292 to 296, and R318 each bind FMN; these read RSS, NA, and KPTSS.

It belongs to the chorismate synthase family. Homotetramer. Requires FMNH2 as cofactor.

The catalysed reaction is 5-O-(1-carboxyvinyl)-3-phosphoshikimate = chorismate + phosphate. Its pathway is metabolic intermediate biosynthesis; chorismate biosynthesis; chorismate from D-erythrose 4-phosphate and phosphoenolpyruvate: step 7/7. Catalyzes the anti-1,4-elimination of the C-3 phosphate and the C-6 proR hydrogen from 5-enolpyruvylshikimate-3-phosphate (EPSP) to yield chorismate, which is the branch point compound that serves as the starting substrate for the three terminal pathways of aromatic amino acid biosynthesis. This reaction introduces a second double bond into the aromatic ring system. The protein is Chorismate synthase of Pseudomonas entomophila (strain L48).